The chain runs to 473 residues: Photosystem II CP43 reaction center protein (473 aa).

The propeptide occupies 1 to 14 (MKILYSLRRFYHVE). Position 15 is an N-acetylthreonine (threonine 15). Phosphothreonine is present on threonine 15. Helical transmembrane passes span 69-93 (LFEV…PHLA), 134-155 (LLGP…QDRN), 178-200 (KALY…RKIT), 255-275 (KPFA…LSYS), and 291-312 (WFNN…ASQA). Residue glutamate 367 participates in [CaMn4O5] cluster binding. The helical transmembrane segment at 447-471 (RARAAAAGFEKGIDRDLEPVVYMTP) threads the bilayer.

Belongs to the PsbB/PsbC family. PsbC subfamily. PSII is composed of 1 copy each of membrane proteins PsbA, PsbB, PsbC, PsbD, PsbE, PsbF, PsbH, PsbI, PsbJ, PsbK, PsbL, PsbM, PsbT, PsbX, PsbY, PsbZ, Psb30/Ycf12, at least 3 peripheral proteins of the oxygen-evolving complex and a large number of cofactors. It forms dimeric complexes. It depends on Binds multiple chlorophylls and provides some of the ligands for the Ca-4Mn-5O cluster of the oxygen-evolving complex. It may also provide a ligand for a Cl- that is required for oxygen evolution. PSII binds additional chlorophylls, carotenoids and specific lipids. as a cofactor. Phosphorylated in both bundle sheath and mesophyll cells, phosphorylation increases when cells are grown under high rather than low light regimes (70 vs 900 umol photons/m-2/s).

The protein localises to the plastid. It localises to the chloroplast thylakoid membrane. Functionally, one of the components of the core complex of photosystem II (PSII). It binds chlorophyll and helps catalyze the primary light-induced photochemical processes of PSII. PSII is a light-driven water:plastoquinone oxidoreductase, using light energy to abstract electrons from H(2)O, generating O(2) and a proton gradient subsequently used for ATP formation. This chain is Photosystem II CP43 reaction center protein, found in Zea mays (Maize).